The chain runs to 114 residues: Protein ELF4-LIKE 4 (114 aa).

A disordered region spans residues 87–114; the sequence is SVDASSEGESSGTLKSDGKANQKRFRSG. Residues 89–100 are compositionally biased toward polar residues; it reads DASSEGESSGTL.

Belongs to the EARLY FLOWERING 4 family. As to quaternary structure, homodimer.

The protein resides in the nucleus. Functionally, component of the central CCA1/LHY-TOC1 feedback loop in the circadian clock that promotes clock accuracy and is required for sustained rhythms in the absence of daily light/dark cycles. The polypeptide is Protein ELF4-LIKE 4 (EFL4) (Arabidopsis thaliana (Mouse-ear cress)).